Reading from the N-terminus, the 198-residue chain is HTH-type transcriptional regulator BetI (198 aa).

An HTH tetR-type domain is found at 8–68 (PIRRQQLIEA…ATMRYLIRHL (61 aa)). The H-T-H motif DNA-binding region spans 31–50 (SIAQIAKRAGVSNGIISHYF).

It participates in amine and polyamine biosynthesis; betaine biosynthesis via choline pathway [regulation]. Its function is as follows. Repressor involved in the biosynthesis of the osmoprotectant glycine betaine. It represses transcription of the choline transporter BetT and the genes of BetAB involved in the synthesis of glycine betaine. In Yersinia pseudotuberculosis serotype O:1b (strain IP 31758), this protein is HTH-type transcriptional regulator BetI.